Here is a 319-residue protein sequence, read N- to C-terminus: Ninja-family protein AFP4 (319 aa).

The span at 39 to 54 (DSEHGENQQEAKKRED) shows a compositional bias: basic and acidic residues. Disordered stretches follow at residues 39–63 (DSEH…EKDV), 99–120 (FVFD…IVGR), and 205–228 (VTGP…NVEN).

This sequence belongs to the Ninja family. In terms of assembly, interacts with ABI5/DPBF1, AREB3/DPBF3, EEL/DPBF4, ABF1 and ABF3/DPBF5. Predominantly expressed in roots and seedlings.

The protein resides in the nucleus. Acts as a negative regulator of abscisic acid (ABA) and salinity responses. The sequence is that of Ninja-family protein AFP4 (AFP4) from Arabidopsis thaliana (Mouse-ear cress).